Here is a 1741-residue protein sequence, read N- to C-terminus: MRLLWGLIWASCFFALSLQKPRLLLFSPSVVRIGVPLSVAVKLQDAPSGQVVRGSVFLRNPSHVNELCSPKVDFSLSSDRDFILLNVPIPQAQARICFLHLRRVPEVQLMVQSSWLRDSLSKQTDMQGVNLLFSSRRGHLFLQTDQPVYNPGQRVRYRVFALDQKMRPATDILTVTVENSQGFRVQKREVFAPFSIFQDSFLIPDISEPGTWKISARFSDSLDSNSSTQFEVKKYVLPNFEVKIIPENPYILTTPGFLSDIQVIIQARYIYGKPVQGVAYVRFGLLGEDGEKTFLRGLESQTKLVDGQCQISLQKAEFQGVLEKLNISTDDLPGLRLYVAAAVIESPGGEMEEAELTSWRFMSSPFSLDLSKTKQQLIPGVPFLLQALVRDMSGSPASSIPVKVSAKLFSGSTSKNQDFEQNTDGSGQVIVSIGVPRTISEVQLSVSAGSPYPAVGSLTVKAPLSRSSGFLSIEWQNPRPLKVGETLKLNLQAVGISGSFSYFYYMIVSRGQIVSVHREPRSHLTSISVFVDHHLVPSFHLVAFYYHGGVPVANSLRVDVQAGGCEGKLELNVDSSKAYRPGDTVKLNLKTESRALVALGAVDTALYAVGGKSHKPLDMVKVFEAMNSYDLGCGPGGGDTAPQVFKAAGLAFSDGDHRTEIRKSLSCPKESKSRKKRNVNFQKAIHEKLGQYTSPVAKRCCQDGLTRLPMARTCEQRAARVQQPACRKPFLSCCQFAESLRKKARTRGQVGLARAMELLQEEDLIEEDDIPVRSFFPENWLWKVEEVDRFSQLRLLLPDSLTTWEIHGMSLSKTTGLCVATPARLRVFREFHMHLRLPVSVRRFEQLELRPVLYNYLDSDLTVSVHVSPVEGLCLAGGGGLAQQVQVPAGSARPVGFSVVPIAAAAVSLKVVARGSFDFPVGDAISKILQVEREGALHREEMVYELNPLDPLGRTLEIPGNSDPNIIPEGDFKSFVRVTASDPLEALGSEGALSPGGLASLLRLPQGCAEQTMTLLAPTLAASRYLDKTEQWSMLPPETKDRAVDLIQKGYTRIQEFRKRDGSYGAWLHRDSSTWLTAFVLKILSLAQDQVGGSAEKLQETATWLLSQQRDDGPFHDPCPVIHREMQGGLVGSDETVALTAFVVIALHHGLAVLPDKNSEQLRRVENSISRANTFLGAKATSGLLGSHASAITAYALSLTEAPEDLRRVAHNNLMAMAKDIGDKLYWGSVTTSPSNVLSPTPAPRSPADPIPQAPAMSIETTAYGLLHLLLWEGKAELADQAASWLTRQGSFQGGFRSTQDTVVALDALSAYWIASYTAEEKGLNVTLSSLGRSGLKSHVLQLTNHQVHRLEEELQFSLGSKINVEVRGNSKGTLKVLRSYNVMDMTNTTCQDLQIEVTVMGHVEYTMEAEEDYEDYEYEDLLAGDDPEAHSRPVTPLQLFDGRRNRRRREAPKAAEERESRVQYTVCIWRTGKVGLSGMAIADITLLSGFHALRADLEKLTSLSDRYMSHFETEGPHVLLYFDSVPTSRECVGFGAVQEVPVGLVQPASAILYDYYNPEHKCSVFYGAPRKSKLLSTLCSADVCQCAEGKCPRQRRALERGQQDLEGYRMKFACYSPRVDYGFQVKVLREDSRAAFRLFETRITQVLHFTKDARATADQTRNFLVRASCRLQLEPGKEYLIMGLDGATYDLKGDPQYLLDSNSWIEEMPSERMCQSTRHRTPCAQLNSFLQEYGTQGCQV.

The N-terminal stretch at 1–19 (MRLLWGLIWASCFFALSLQ) is a signal peptide. Asparagine 60 carries N-linked (GlcNAc...) asparagine glycosylation. Cysteine 68 and cysteine 97 are joined by a disulfide. Asparagine 225 and asparagine 326 each carry an N-linked (GlcNAc...) asparagine glycan. Cysteine 633 and cysteine 667 form a disulfide bridge. Residues 674–677 (RKKR) constitute a propeptide that is removed on maturation. 3 disulfides stabilise this stretch: cysteine 700/cysteine 726, cysteine 701/cysteine 733, and cysteine 714/cysteine 734. Residues 700–734 (CCQDGLTRLPMARTCEQRAARVQQPACRKPFLSCC) enclose the Anaphylatoxin-like domain. At serine 916 the chain carries Phosphoserine. A cross-link (isoglutamyl cysteine thioester (Cys-Gln)) is located at residues 1008–1011 (CAEQ). Residue threonine 1241 is glycosylated (O-linked (GalNAc...) threonine). Asparagine 1325 and asparagine 1388 each carry an N-linked (GlcNAc...) asparagine glycan. 3 positions are modified to sulfotyrosine: tyrosine 1414, tyrosine 1417, and tyrosine 1419. A propeptide spanning residues 1447–1450 (RRRR) is cleaved from the precursor. Intrachain disulfides connect cysteine 1468–cysteine 1532, cysteine 1580–cysteine 1585, cysteine 1592–cysteine 1670, cysteine 1615–cysteine 1739, and cysteine 1715–cysteine 1724. The NTR domain occupies 1592-1739 (CPRQRRALER…FLQEYGTQGC (148 aa)).

In absence of complement activation, circulates in blood as a disulfide-linked trimer of an alpha, beta and gamma chain. As to quaternary structure, complement C4b is composed of complement C4b-A, complement C4 beta and complement C4 gamma chains that are associated via disulfide bonds. Non-enzymatic component of the C3 convertase, also named C4bC2b, composed of the serine protease complement C2b (C2), as well as complement C4b. Non-enzymatic component of the C5 convertase, also named C4bC2bC3b, composed of the serine protease complement C2b (C2), complement C3b, as well as complement C4b. In terms of processing, prior to secretion, the single-chain precursor is enzymatically cleaved by plasminogen (PLG) to yield non-identical chains alpha, beta and gamma. During activation of the complement systems, the alpha chain is cleaved into C4a and C4b by different proteases depending on the complement pathway: C4b stays linked to the beta and gamma chains, while C4a is released in the plasma. The alpha chain is cleaved by C1S to generate C4a and C4b following activation by the classical complement system. The alpha chain is cleaved to generate C4a and C4b by MASP2 following activation by the lectin complement system. The alpha chain is cleaved by GZMK to generate C4a and C4b following activation by the GZMK complement system. Further degradation of C4b by C1 into the inactive fragments C4c and C4d blocks the generation of C3 convertase. The proteolytic cleavages often are incomplete so that many structural forms can be found in plasma. Post-translationally, upon activation, the internal thioester bond reacts with carbohydrate antigens on the target surface to form amide or ester bonds, leading to covalent association with the surface of pathogens. Complement C4b interacts with complement C3b via a thioester linkage. In terms of processing, N- and O-glycosylated. O-glycosylated with a core 1 or possibly core 8 glycan.

The protein localises to the secreted. Its subcellular location is the cell surface. In terms of biological role, precursor of non-enzymatic components of the classical, lectin and GZMK complement pathways, which consist in a cascade of proteins that leads to phagocytosis and breakdown of pathogens and signaling that strengthens the adaptive immune system. Functionally, non-enzymatic component of C3 and C5 convertases. Generated following cleavage by complement proteases (C1S, MASP2 or GZMK, depending on the complement pathway), it covalently attaches to the surface of pathogens, where it acts as an opsonin that marks the surface of antigens for removal. It then recruits the serine protease complement C2b to form the C3 and C5 convertases, which cleave and activate C3 and C5, respectively, the next components of the complement pathways. Complement C4b-A isotype is responsible for effective binding to form amide bonds with immune aggregates or protein antigens, while complement C4b-B isotype catalyzes the transacylation of the thioester carbonyl group to form ester bonds with carbohydrate antigens. Its function is as follows. Putative humoral mediator released following cleavage by complement proteases (C1S, MASP2 or GZMK, depending on the complement pathway). While it is strongly similar to anaphylatoxins, its role is unclear. Was reported to act as a mediator of local inflammatory process; however these effects were probably due to contamination with C3a and/C5a anaphylatoxins in biological assays. The protein is Complement C4 (C4) of Bos taurus (Bovine).